Reading from the N-terminus, the 403-residue chain is Phosphoglycerate kinase (403 aa).

Residues 21 to 23, arginine 36, 59 to 62, arginine 119, and arginine 159 contribute to the substrate site; these read DFN and HLGR. Residues lysine 214, glycine 301, glutamate 332, and 359-362 contribute to the ATP site; that span reads GGDS.

The protein belongs to the phosphoglycerate kinase family. In terms of assembly, monomer.

It localises to the cytoplasm. It catalyses the reaction (2R)-3-phosphoglycerate + ATP = (2R)-3-phospho-glyceroyl phosphate + ADP. It functions in the pathway carbohydrate degradation; glycolysis; pyruvate from D-glyceraldehyde 3-phosphate: step 2/5. The polypeptide is Phosphoglycerate kinase (Lactobacillus delbrueckii subsp. lactis).